The chain runs to 869 residues: Translation initiation factor IF-2 (869 aa).

Disordered regions lie at residues 51-78 and 105-277; these read KQHG…NMGK and EEET…SDLK. The segment covering 67 to 76 has biased composition (polar residues); that stretch reads QRKTTSTLNM. Low complexity predominate over residues 110-119; the sequence is RALAEQQAQL. Residues 120–241 are compositionally biased toward basic and acidic residues; sequence EAEKAAAEEA…KKQEAEEVHV (122 aa). The tr-type G domain occupies 369–542; it reads SRAPVVTIMG…ELLDLKAPPT (174 aa). The segment at 378-385 is G1; that stretch reads GHVDHGKT. 378–385 contacts GTP; the sequence is GHVDHGKT. A G2 region spans residues 403–407; it reads GITQH. Positions 424–427 are G3; the sequence is DTPG. GTP contacts are provided by residues 424–428 and 478–481; these read DTPGH and NKMD. A G4 region spans residues 478–481; it reads NKMD. A G5 region spans residues 514–516; the sequence is SAK.

It belongs to the TRAFAC class translation factor GTPase superfamily. Classic translation factor GTPase family. IF-2 subfamily.

The protein localises to the cytoplasm. Its function is as follows. One of the essential components for the initiation of protein synthesis. Protects formylmethionyl-tRNA from spontaneous hydrolysis and promotes its binding to the 30S ribosomal subunits. Also involved in the hydrolysis of GTP during the formation of the 70S ribosomal complex. The chain is Translation initiation factor IF-2 from Pseudoalteromonas atlantica (strain T6c / ATCC BAA-1087).